The primary structure comprises 1057 residues: Structural maintenance of chromosomes protein 6B (1057 aa).

The region spanning I22–I1047 is the Zinc-hook domain. G49–S56 is a binding site for ATP. The stretch at K135 to K448 forms a coiled coil. The interval V449–L632 is flexible hinge. A coiled-coil region spans residues C633–C904. Positions K818–A828 are enriched in basic and acidic residues. Residues K818–G845 are disordered.

This sequence belongs to the SMC family. SMC6 subfamily. As to quaternary structure, forms a heterodimer with SMC5. The SMC5-SMC6 complex is composed of the SMC5 and SMC6 heterodimer attached via their hinge domain and from the non-SMC subunit NSE4A or NSE4B. Expressed in seedlings, rosette leaves and floral buds.

It localises to the nucleus. The protein localises to the chromosome. Core component of the SMC5-SMC6 complex that promotes sister chromatid alignment after DNA damage and facilitates double-stranded DNA breaks (DSBs) repair via homologous recombination between sister chromatids. The protein is Structural maintenance of chromosomes protein 6B (SMC6B) of Arabidopsis thaliana (Mouse-ear cress).